The primary structure comprises 254 residues: Type III pantothenate kinase (254 aa).

Residue 6 to 13 participates in ATP binding; that stretch reads DVGNTNTV. Substrate-binding positions include Tyr100 and 107–110; that span reads GADR. Asp109 (proton acceptor) is an active-site residue. A K(+)-binding site is contributed by Asp129. An ATP-binding site is contributed by Thr132. Substrate is bound at residue Thr184.

It belongs to the type III pantothenate kinase family. As to quaternary structure, homodimer. Requires NH4(+) as cofactor. K(+) serves as cofactor.

Its subcellular location is the cytoplasm. It catalyses the reaction (R)-pantothenate + ATP = (R)-4'-phosphopantothenate + ADP + H(+). It functions in the pathway cofactor biosynthesis; coenzyme A biosynthesis; CoA from (R)-pantothenate: step 1/5. Catalyzes the phosphorylation of pantothenate (Pan), the first step in CoA biosynthesis. This chain is Type III pantothenate kinase, found in Syntrophus aciditrophicus (strain SB).